Reading from the N-terminus, the 490-residue chain is Betaine aldehyde dehydrogenase (490 aa).

Aspartate 93 contacts K(+). 150–152 is a binding site for NAD(+); it reads GAW. Lysine 162 acts as the Charge relay system in catalysis. Residue 176-179 coordinates NAD(+); that stretch reads KPSE. Residue valine 180 participates in K(+) binding. 230–233 is an NAD(+) binding site; the sequence is GIAS. Leucine 246 provides a ligand contact to K(+). Glutamate 252 acts as the Proton acceptor in catalysis. 3 residues coordinate NAD(+): glycine 254, cysteine 286, and glutamate 387. Residue cysteine 286 is the Nucleophile of the active site. Cysteine 286 carries the cysteine sulfenic acid (-SOH) modification. K(+)-binding residues include lysine 457 and glycine 460. Residue glutamate 464 is the Charge relay system of the active site.

Belongs to the aldehyde dehydrogenase family. In terms of assembly, dimer of dimers. Requires K(+) as cofactor.

It catalyses the reaction betaine aldehyde + NAD(+) + H2O = glycine betaine + NADH + 2 H(+). Its pathway is amine and polyamine biosynthesis; betaine biosynthesis via choline pathway; betaine from betaine aldehyde: step 1/1. Its function is as follows. Involved in the biosynthesis of the osmoprotectant glycine betaine. Catalyzes the irreversible oxidation of betaine aldehyde to the corresponding acid. This is Betaine aldehyde dehydrogenase from Yersinia pseudotuberculosis serotype O:3 (strain YPIII).